The following is a 358-amino-acid chain: MSRLKNDTFLRALLRQPTEYTPVWLMRQAGRYLPEYCETRKRAGSFLNLCKSPALACEVTLQPLARYDLDAAILFSDILTVPDAMGLGLYFAEGEGPRFERPLRDEWEIRNLSVPDPHAELQYVMDAVSEIRRALDGSVPLIGFSGSPWTLACYMVEGGSSDDYRRIKTMAYSRPDLLHHILGVTADAVVQYLNAQIEAGAQAVMVFDSWGGVLAEAAYREFSLRYLQRVVDGLIREREGQRVPSIVFTKGGGIWLESIAAIGSDAVGLDWTMDIGRARALVGQRVALQGNLDPSILFAPPEAVAAEARRVLDAYGPHPGHVFNLGHGISQFTPPENVSVLVDTVHDHSRKLRAAVGG.

Substrate is bound by residues 27–31 (RQAGR), Asp77, Tyr154, Ser209, and His327.

The protein belongs to the uroporphyrinogen decarboxylase family. Homodimer.

It localises to the cytoplasm. It catalyses the reaction uroporphyrinogen III + 4 H(+) = coproporphyrinogen III + 4 CO2. Its pathway is porphyrin-containing compound metabolism; protoporphyrin-IX biosynthesis; coproporphyrinogen-III from 5-aminolevulinate: step 4/4. Its function is as follows. Catalyzes the decarboxylation of four acetate groups of uroporphyrinogen-III to yield coproporphyrinogen-III. This is Uroporphyrinogen decarboxylase from Azoarcus sp. (strain BH72).